The primary structure comprises 133 residues: Capsid protein (133 aa).

This sequence belongs to the Leviviricetes capsid protein family. Homodimer. The capsid protein dimer binds to the viral RNA via an operator hairpin, but also many other RNA sequences in the viral genome.

Its subcellular location is the virion. Its function is as follows. Capsid protein self-assembles to form an icosahedral capsid with a T=3 symmetry, about 26 nm in diameter, and consisting of 89 capsid proteins dimers (178 capsid proteins). Involved in viral genome encapsidation through the interaction between a capsid protein dimer and the multiple packaging signals present in the RNA genome. Binding of the capsid proteins to the viral RNA induces a conformational change required for efficient T=3 shell formation. The capsid also contains 1 copy of the A2 maturation protein. Functionally, acts as a translational repressor of viral replicase synthesis late in infection. This latter function is the result of capsid protein interaction with an RNA hairpin which contains the replicase ribosome-binding site. The polypeptide is Capsid protein (Escherichia coli).